The chain runs to 360 residues: UDP-arabinopyranose mutase 2 (360 aa).

Val2 carries the post-translational modification N-acetylvaline. The DXD motif motif lies at Asp110–Asp112. An N-linked (Glc...) arginine glycan is attached at Arg158.

It belongs to the RGP family. As to quaternary structure, heteromers with RGP1, RGP4 and RGP5. The cofactor is Mn(2+). It depends on Mg(2+) as a cofactor. Reversibly glycosylated in vitro by UDP-glucose, UDP-xylose and UDP-galactose, but not UDP-mannose. In terms of tissue distribution, predominantly expressed in shoot and root apical meristems. Expressed in epidermal cells of leaves, inflorescence stems and seed coat. Expressed in pollen.

The protein resides in the cytoplasm. Its subcellular location is the cytosol. It localises to the golgi apparatus. The catalysed reaction is UDP-beta-L-arabinofuranose = UDP-beta-L-arabinopyranose. UDP-L-arabinose mutase involved in the biosynthesis of cell wall non-cellulosic polysaccharides. Catalyzes the interconvertion of UDP-L-arabinopyranose (UDP-Arap) and UDP-L-arabinofuranose (UDP-Araf) in vitro. Preferentially catalyzes the formation of UDP-Arap from UDP-Araf. At thermodynamic equilibrium in vitro the ratio of the pyranose form over the furanose form is 95:5. Is not active on other UDP-sugars (UDP-Gal, UDP-Xyl, UDP-Glc, GDP-Man and GDP-Fuc). Functions redundantly with RGP2 and is essential for proper cell walls and pollen development. Probably involved in the formation of the pectocellulosic cell wall layer intine. Is probably active as heteromer in vivo. In Arabidopsis thaliana (Mouse-ear cress), this protein is UDP-arabinopyranose mutase 2.